Consider the following 330-residue polypeptide: Glucan endo-1,3-beta-glucosidase GIII (330 aa).

Residues 1–25 (MARKGVDVAVALVLVALAAFPAVHS) form the signal peptide. The Proton donor role is filled by Glu-117. Glu-255 functions as the Nucleophile in the catalytic mechanism.

Belongs to the glycosyl hydrolase 17 family.

The enzyme catalyses Hydrolysis of (1-&gt;3)-beta-D-glucosidic linkages in (1-&gt;3)-beta-D-glucans.. Functionally, may provide a degree of protection against microbial invasion of germinated barley grain through its ability to degrade fungal cell wall polysaccharides. The chain is Glucan endo-1,3-beta-glucosidase GIII from Hordeum vulgare (Barley).